The sequence spans 482 residues: Mannose-1-phosphate guanylyltransferase 2 (482 aa).

Belongs to the mannose-6-phosphate isomerase type 2 family.

The catalysed reaction is alpha-D-mannose 1-phosphate + GTP + H(+) = GDP-alpha-D-mannose + diphosphate. The protein operates within nucleotide-sugar biosynthesis; GDP-alpha-D-mannose biosynthesis; GDP-alpha-D-mannose from alpha-D-mannose 1-phosphate (GTP route): step 1/1. In terms of biological role, involved in GDP-mannose biosynthesis which serves as the activated sugar nucleotide precursor for mannose residues in cell surface polysaccharides. This enzyme participates in synthesis of the LPS O antigen. The sequence is that of Mannose-1-phosphate guanylyltransferase 2 (manC2) from Escherichia coli O157:H7.